A 107-amino-acid chain; its full sequence is Integration host factor (107 aa).

A disordered region spans residues 1 to 20 (MALPPLTPEQRAAALEKAAA). Positions 9–18 (EQRAAALEKA) are enriched in low complexity. Residue Lys-54 coordinates DNA. The H2TH motif, binds DNA signature appears at 64–71 (LPGVGKVR). Positions 82, 85, 88, 92, 93, and 94 each coordinate DNA. The tract at residues 82 to 94 (SESRRVRGLGSNQ) is lid, binds DNA.

Belongs to the actinobacterial IHF (aIHF) family. As to quaternary structure, monomer.

It is found in the cytoplasm. Its subcellular location is the spore. It localises to the nucleoid. In terms of biological role, a nucleoid-associated protein (NAP) that probably plays a role in chromosome compactation. Contributes to development and secondary metabolism, but is dispensable for growth and viability. Binds to the promoter region of a number of genes (including itself); multiple molecules of the protein bind to the DNA simultaneously, deletion alters the expression of about 30 genes (both up- and down-regulation occurs). Plays a role in controlling viability. Binds dsDNA without any obvious sequence specificity, in a concentration and length-dependent manner. Promotes supercoiling in a topoisomerase-dependent manner (counteracts TopA plasmid relaxation). Binds DNA as a monomer, contacting 8 base pairs via the phosphate backbone; each monomer can bind 2 DNA duplexes, allowing a bridging function. Alters DNA topology, constraining negative supercoils, possibly by DNA twist. Longer dsDNA binds more than one sIHF subunit. This is Integration host factor from Streptomyces coelicolor (strain ATCC BAA-471 / A3(2) / M145).